The chain runs to 200 residues: Molybdenum cofactor guanylyltransferase (200 aa).

GTP contacts are provided by residues 15 to 17, lysine 28, aspartate 74, and aspartate 104; that span reads LSG. Position 104 (aspartate 104) interacts with Mg(2+).

It belongs to the MobA family. Monomer. Requires Mg(2+) as cofactor.

It is found in the cytoplasm. It catalyses the reaction Mo-molybdopterin + GTP + H(+) = Mo-molybdopterin guanine dinucleotide + diphosphate. Transfers a GMP moiety from GTP to Mo-molybdopterin (Mo-MPT) cofactor (Moco or molybdenum cofactor) to form Mo-molybdopterin guanine dinucleotide (Mo-MGD) cofactor. The sequence is that of Molybdenum cofactor guanylyltransferase from Pseudomonas fluorescens (strain SBW25).